The sequence spans 500 residues: Aspartyl/glutamyl-tRNA(Asn/Gln) amidotransferase subunit B (500 aa).

Belongs to the GatB/GatE family. GatB subfamily. Heterotrimer of A, B and C subunits.

It catalyses the reaction L-glutamyl-tRNA(Gln) + L-glutamine + ATP + H2O = L-glutaminyl-tRNA(Gln) + L-glutamate + ADP + phosphate + H(+). The enzyme catalyses L-aspartyl-tRNA(Asn) + L-glutamine + ATP + H2O = L-asparaginyl-tRNA(Asn) + L-glutamate + ADP + phosphate + 2 H(+). Functionally, allows the formation of correctly charged Asn-tRNA(Asn) or Gln-tRNA(Gln) through the transamidation of misacylated Asp-tRNA(Asn) or Glu-tRNA(Gln) in organisms which lack either or both of asparaginyl-tRNA or glutaminyl-tRNA synthetases. The reaction takes place in the presence of glutamine and ATP through an activated phospho-Asp-tRNA(Asn) or phospho-Glu-tRNA(Gln). This chain is Aspartyl/glutamyl-tRNA(Asn/Gln) amidotransferase subunit B, found in Brucella anthropi (strain ATCC 49188 / DSM 6882 / CCUG 24695 / JCM 21032 / LMG 3331 / NBRC 15819 / NCTC 12168 / Alc 37) (Ochrobactrum anthropi).